Here is a 347-residue protein sequence, read N- to C-terminus: GTP 3',8-cyclase (347 aa).

Residues 10–242 enclose the Radical SAM core domain; the sequence is RLNRPIGVLR…ERINARWPLE (233 aa). GTP is bound at residue Arg19. [4Fe-4S] cluster contacts are provided by Cys26 and Cys30. An S-adenosyl-L-methionine-binding site is contributed by Tyr32. Cys33 is a binding site for [4Fe-4S] cluster. Arg65 is a binding site for GTP. Gly69 contacts S-adenosyl-L-methionine. Position 104 (Thr104) interacts with GTP. Residue Ser129 participates in S-adenosyl-L-methionine binding. Residue Lys178 coordinates GTP. Met212 contributes to the S-adenosyl-L-methionine binding site. Cys275 and Cys278 together coordinate [4Fe-4S] cluster. 280-282 is a binding site for GTP; that stretch reads RLR. Position 292 (Cys292) interacts with [4Fe-4S] cluster.

It belongs to the radical SAM superfamily. MoaA family. As to quaternary structure, monomer and homodimer. [4Fe-4S] cluster is required as a cofactor.

It catalyses the reaction GTP + AH2 + S-adenosyl-L-methionine = (8S)-3',8-cyclo-7,8-dihydroguanosine 5'-triphosphate + 5'-deoxyadenosine + L-methionine + A + H(+). Its pathway is cofactor biosynthesis; molybdopterin biosynthesis. Catalyzes the cyclization of GTP to (8S)-3',8-cyclo-7,8-dihydroguanosine 5'-triphosphate. This chain is GTP 3',8-cyclase, found in Synechococcus sp. (strain CC9605).